The primary structure comprises 198 residues: Glycerol-3-phosphate acyltransferase (198 aa).

The next 5 helical transmembrane spans lie at Leu-4–Ile-24, Ser-53–Phe-75, Pro-80–Phe-102, Leu-112–Val-132, and Val-134–Phe-154.

It belongs to the PlsY family. Probably interacts with PlsX.

The protein resides in the cell inner membrane. The catalysed reaction is an acyl phosphate + sn-glycerol 3-phosphate = a 1-acyl-sn-glycero-3-phosphate + phosphate. It participates in lipid metabolism; phospholipid metabolism. Catalyzes the transfer of an acyl group from acyl-phosphate (acyl-PO(4)) to glycerol-3-phosphate (G3P) to form lysophosphatidic acid (LPA). This enzyme utilizes acyl-phosphate as fatty acyl donor, but not acyl-CoA or acyl-ACP. The protein is Glycerol-3-phosphate acyltransferase of Aliivibrio fischeri (strain ATCC 700601 / ES114) (Vibrio fischeri).